A 280-amino-acid chain; its full sequence is F-box only protein 27 (280 aa).

Residues 20 to 67 (VLDLSRLPPELLLLVLSHVPPRTLLMHCRRVCRAWRALVDGQALWLLL) enclose the F-box domain. Positions 101–277 (FCALRPLGRN…VTNSSVIIRV (177 aa)) constitute an FBA domain.

Part of a SCF (SKP1-cullin-F-box) protein ligase complex. Interacts with SKP1 and CUL1. In terms of tissue distribution, detected in brain, heart and muscle.

In terms of biological role, substrate-recognition component of the SCF (SKP1-CUL1-F-box protein)-type E3 ubiquitin ligase complex. Able to recognize and bind complex-type oligosaccharides. The sequence is that of F-box only protein 27 (Fbxo27) from Mus musculus (Mouse).